The following is a 519-amino-acid chain: Cobyric acid synthase (519 aa).

One can recognise a GATase cobBQ-type domain in the interval 256 to 438 (WLRVAVPRLP…WHGLFENDAF (183 aa)). Cys337 functions as the Nucleophile in the catalytic mechanism. Residue His430 is part of the active site.

This sequence belongs to the CobB/CobQ family. CobQ subfamily.

The protein operates within cofactor biosynthesis; adenosylcobalamin biosynthesis. Catalyzes amidations at positions B, D, E, and G on adenosylcobyrinic A,C-diamide. NH(2) groups are provided by glutamine, and one molecule of ATP is hydrogenolyzed for each amidation. The sequence is that of Cobyric acid synthase from Saccharopolyspora erythraea (strain ATCC 11635 / DSM 40517 / JCM 4748 / NBRC 13426 / NCIMB 8594 / NRRL 2338).